A 261-amino-acid chain; its full sequence is Cytochrome c oxidase subunit 3 (261 aa).

Residues M1–P15 lie on the Mitochondrial matrix side of the membrane. The helical transmembrane segment at W16–W34 threads the bilayer. The Mitochondrial intermembrane segment spans residues F35–Y40. A helical membrane pass occupies residues T41 to T66. Topologically, residues Y67–T72 are mitochondrial matrix. Residues K73 to S105 traverse the membrane as a helical segment. Residues L106–E128 are Mitochondrial intermembrane-facing. Residues V129–M152 traverse the membrane as a helical segment. Residues E153–N155 are Mitochondrial matrix-facing. The chain crosses the membrane as a helical span at residues R156–E183. At A184 to D190 the chain is on the mitochondrial intermembrane side. A helical transmembrane segment spans residues G191–T223. At L224–H232 the chain is on the mitochondrial matrix side. Residues F233–I256 form a helical membrane-spanning segment. At Y257–S261 the chain is on the mitochondrial intermembrane side.

The protein belongs to the cytochrome c oxidase subunit 3 family. In terms of assembly, component of the cytochrome c oxidase (complex IV, CIV), a multisubunit enzyme composed of 14 subunits. The complex is composed of a catalytic core of 3 subunits MT-CO1, MT-CO2 and MT-CO3, encoded in the mitochondrial DNA, and 11 supernumerary subunits COX4I, COX5A, COX5B, COX6A, COX6B, COX6C, COX7A, COX7B, COX7C, COX8 and NDUFA4, which are encoded in the nuclear genome. The complex exists as a monomer or a dimer and forms supercomplexes (SCs) in the inner mitochondrial membrane with NADH-ubiquinone oxidoreductase (complex I, CI) and ubiquinol-cytochrome c oxidoreductase (cytochrome b-c1 complex, complex III, CIII), resulting in different assemblies (supercomplex SCI(1)III(2)IV(1) and megacomplex MCI(2)III(2)IV(2)).

It is found in the mitochondrion inner membrane. It carries out the reaction 4 Fe(II)-[cytochrome c] + O2 + 8 H(+)(in) = 4 Fe(III)-[cytochrome c] + 2 H2O + 4 H(+)(out). Functionally, component of the cytochrome c oxidase, the last enzyme in the mitochondrial electron transport chain which drives oxidative phosphorylation. The respiratory chain contains 3 multisubunit complexes succinate dehydrogenase (complex II, CII), ubiquinol-cytochrome c oxidoreductase (cytochrome b-c1 complex, complex III, CIII) and cytochrome c oxidase (complex IV, CIV), that cooperate to transfer electrons derived from NADH and succinate to molecular oxygen, creating an electrochemical gradient over the inner membrane that drives transmembrane transport and the ATP synthase. Cytochrome c oxidase is the component of the respiratory chain that catalyzes the reduction of oxygen to water. Electrons originating from reduced cytochrome c in the intermembrane space (IMS) are transferred via the dinuclear copper A center (CU(A)) of subunit 2 and heme A of subunit 1 to the active site in subunit 1, a binuclear center (BNC) formed by heme A3 and copper B (CU(B)). The BNC reduces molecular oxygen to 2 water molecules using 4 electrons from cytochrome c in the IMS and 4 protons from the mitochondrial matrix. This chain is Cytochrome c oxidase subunit 3 (MT-CO3), found in Ornithorhynchus anatinus (Duckbill platypus).